The primary structure comprises 398 residues: MVTLITEKLQSQSLDDLTCKAEAGPLQYSAETLNKSGRLFPLELNDQSPWKVFSGGPPVRSQAATGPDFSFLPGLSAAAHTMGLQWQPQSPRPGAGLGAASTVDPSESTGSSTAPPTKRHCRSLSEPEELVRCRSPWRPGSSKVWTPVSKRRCDSGGSATRQGSPGAVLPRSAVWSTGPTSPATPRPSSASGGFVDSSEGSAGSGPLWCSAESCLPSTRRRPSLSQERLAGAGTPLPWASSSPTSTPALGGRRGLLRCRSQPCVLSGKRSRRKRRREEDARWTRPSLDFLKMTQTLKNSKSLCSLNYEDDDEDDTPVKTVLSSPCDSRGLPGITMPGCSQRGLRTSPVHPNLWASRESVTSDGSRRSSGDPRDGDSVGEEGVFPRARWELDLEQIENN.

Residues Gln-85–Arg-253 form a disordered region. Polar residues predominate over residues Val-103–Pro-115. A compositionally biased stretch (basic and acidic residues) spans Ser-123–Arg-132. Ser-125 is subject to Phosphoserine. Low complexity-rich tracts occupy residues Ser-176–Gly-193 and Thr-234–Gly-250. The short motif at Lys-268–Arg-276 is the Nuclear localization signal element. Residues Ser-301 and Ser-304 each carry the phosphoserine modification. The tract at residues Pro-336–Asn-398 is disordered. Residues Gly-363–Asp-375 show a composition bias toward basic and acidic residues.

This sequence belongs to the FAM53 family.

It is found in the nucleus. In terms of biological role, may play an important role in neural development; the dorsomedial roof of the third ventricle. The chain is Protein FAM53A from Homo sapiens (Human).